A 192-amino-acid chain; its full sequence is Anthrone oxygenase (192 aa).

The next 3 membrane-spanning stretches (helical) occupy residues 12–32 (IVTGSFLSGAMITLSTITVPV), 54–74 (GHISLPTISIATAILYFYIAA), and 86–106 (AALVGFLTIVMVPFTWIVMSS). N-linked (GlcNAc...) asparagine glycans are attached at residues Asn130, Asn138, and Asn147. The helical transmembrane segment at 172–192 (MHLVRSLFPLMAAVLGVGICV) threads the bilayer.

The protein belongs to the anthrone oxygenase family.

It is found in the membrane. The catalysed reaction is emodin anthrone + O2 = emodin + H2O + H(+). Its pathway is secondary metabolite biosynthesis. Anthrone oxygenase; part of the gene cluster that mediates the biosynthesis of monodictyphenone, a prenyl xanthone derivative. The pathway begins with the synthesis of atrochrysone thioester by the polyketide synthase (PKS) mdpG. The atrochrysone carboxyl ACP thioesterase mdpF then breaks the thioester bond and releases the atrochrysone carboxylic acid from mdpG. The atrochrysone carboxylic acid is then converted to atrochrysone which is further transformed into emodin anthrone by mdpH-1 and mdpH-2. Emodin is further modified to yield monodictyphenone via several steps involving mdpB, mdpC mdpJ, mdpK and mdpL. These enzymes with xptA, xptB and xptC are also proposed to be involved in the synthesis of shamixanthone from emodin. Especially, direct reduction of emodin by the short chain dehydrogenase mdpC followed by dehydration catalyzed by the scytalone dehydratase-like protein mdpB gives loss of oxygen and formation of chrysophanol intermediate in two simple steps. The protein is Anthrone oxygenase of Emericella nidulans (strain FGSC A4 / ATCC 38163 / CBS 112.46 / NRRL 194 / M139) (Aspergillus nidulans).